A 296-amino-acid chain; its full sequence is Protoheme IX farnesyltransferase (296 aa).

Residues 1-9 (MMFKQYLQV) are Cytoplasmic-facing. Residues 10–28 (TKPGIIFGNLISVIGGFLL) form a helical membrane-spanning segment. Over 29-37 (ASKGSIDYP) the chain is Periplasmic. A helical membrane pass occupies residues 38–56 (LFIYTLVGVSLVVASGCVF). Topologically, residues 57–78 (NNYIDRDIDRKMERTKNRVLVK) are cytoplasmic. Residues 79 to 97 (GLISPGVSLVYATLLGIAG) traverse the membrane as a helical segment. The Periplasmic portion of the chain corresponds to 98-107 (FMLLWFGANP). A helical transmembrane segment spans residues 108 to 126 (LACWLGVMGFVVYVGVYSL). Over 127-197 (YMKRHSVYGT…YQAANIPVLP (71 aa)) the chain is Cytoplasmic. A helical transmembrane segment spans residues 198–216 (VVKGISVAKNHITLYIIAF). At 217 to 228 (AVATLMLTLGGY) the chain is on the periplasmic side. Residues 229 to 247 (AGYKYLVVAAAVSVWWLGM) traverse the membrane as a helical segment. The Cytoplasmic segment spans residues 248–268 (ALRGYKVEDDKVWARKLFGFS). Residues 269-287 (IIAITALSIMMSVDFMVPN) traverse the membrane as a helical segment. The Periplasmic segment spans residues 288 to 296 (SQNLLTYVW).

It belongs to the UbiA prenyltransferase family. Protoheme IX farnesyltransferase subfamily.

The protein resides in the cell inner membrane. It catalyses the reaction heme b + (2E,6E)-farnesyl diphosphate + H2O = Fe(II)-heme o + diphosphate. Its pathway is porphyrin-containing compound metabolism; heme O biosynthesis; heme O from protoheme: step 1/1. Converts heme B (protoheme IX) to heme O by substitution of the vinyl group on carbon 2 of heme B porphyrin ring with a hydroxyethyl farnesyl side group. The protein is Protoheme IX farnesyltransferase of Salmonella typhimurium (strain LT2 / SGSC1412 / ATCC 700720).